Reading from the N-terminus, the 167-residue chain is Novel acetylcholine receptor chaperone (167 aa).

The Cytoplasmic segment spans residues 1 to 5; it reads MASPR. The helical transmembrane segment at 6–26 threads the bilayer; the sequence is TITIMALSVALGLFFVFMGTI. Topologically, residues 27 to 61 are lumenal; it reads KLTPRLSKDAYSEMKRAYKSYVRALPLLKKMGINS. Residues 43–54 form an interaction with NGFR region; the sequence is AYKSYVRALPLL. A helical membrane pass occupies residues 62-82; sequence ILLRKSIGALEVACGIVMTLV. Residues 83 to 88 lie on the Cytoplasmic side of the membrane; sequence PGRPKD. A helical membrane pass occupies residues 89 to 109; the sequence is VANFFLLLLVLAVLFFHQLVG. Residues 110–114 are Lumenal-facing; that stretch reads DPLKR. The chain crosses the membrane as a helical span at residues 115–132; it reads YAHALVFGILLTCRLLIA. Residues 133-167 are Cytoplasmic-facing; the sequence is RKPEDRSSEKKALPESAEEQPSLYEKAPQGKVKVS. The segment covering 135–145 has biased composition (basic and acidic residues); it reads PEDRSSEKKAL. The disordered stretch occupies residues 135 to 167; sequence PEDRSSEKKALPESAEEQPSLYEKAPQGKVKVS.

The protein belongs to the DoxX family. In terms of assembly, may interact with NGFR. Interacts with RPN1, RPN2 and CANX. In terms of tissue distribution, brain (at protein level). Expressed in the spinal cord dorsal horn (at protein level).

The protein resides in the peroxisome membrane. It localises to the cytoplasmic vesicle. The protein localises to the endoplasmic reticulum membrane. Molecular chaperone which mediates the proper assembly and functional expression of the nicotinic acetylcholine receptors (nAChRs) throughout the brain. Essential for the proper folding, assembly, function and surface trafficking of alpha-7 (CHRNA7), alpha-4-beta-2, alpha-3-beta-2 and alpha-3-beta-4 receptors. Stably associates with ribophorin-1 (RPN1) and ribophorin-2 (RPN2) (components of the oligosaccharyl transferase (OST) complex) and with calnexin (CANX), both of which are critical for NACHO-mediated effects on CHRNA7 assembly and function. Facilitates the proper folding and assembly of alpha-6-beta-2 and alpha-6-beta-2-beta-3 receptors and acts at early stages of the nAChRs subunit assembly. Promotes the expression of the alpha-4(2):beta-2(3) stoichiometric form over the alpha-4(3):beta-2(2) form. In Mus musculus (Mouse), this protein is Novel acetylcholine receptor chaperone.